Here is a 68-residue protein sequence, read N- to C-terminus: Large ribosomal subunit protein uL30 (68 aa).

It belongs to the universal ribosomal protein uL30 family. Part of the 50S ribosomal subunit.

This is Large ribosomal subunit protein uL30 from Bartonella tribocorum (strain CIP 105476 / IBS 506).